The sequence spans 218 residues: Ropporin-1-like protein (218 aa).

The 38-residue stretch at 17–54 (PALPNMLKQFTKAAIRTQPRDVLQWAADYFSALSKGQD) folds into the RIIa domain. Residues 199 to 218 (QSQGGMVQPSNFTSLHTAEK) are disordered.

It belongs to the ropporin family. As to quaternary structure, component of axonemal radial spoke complexes.

Its subcellular location is the cell projection. The protein resides in the cilium. It is found in the flagellum. Its function is as follows. Functions as part of axonemal radial spoke complexes that play an important part in the motility of sperm and cilia. Important for male fertility. Involved in fibrous sheath integrity and sperm motility, plays a role in PKA-dependent signaling processes required for spermatozoa capacitation. The protein is Ropporin-1-like protein (ropn1l) of Danio rerio (Zebrafish).